We begin with the raw amino-acid sequence, 1317 residues long: Clustered mitochondria protein homolog (1317 aa).

The 245-residue stretch at 382–626 folds into the Clu domain; sequence DITRSQESYL…RVTPLDVTWQ (245 aa). Positions 669-689 are enriched in basic and acidic residues; it reads KAQEEAANKEQSSEVTESKEQ. 2 disordered regions span residues 669 to 700 and 939 to 966; these read KAQE…EALD and ANGV…PSRA. 3 TPR repeats span residues 1040-1073, 1082-1115, and 1124-1157; these read AKLY…TERT, ILAY…WKII, and ITTM…CESL. Disordered stretches follow at residues 1252–1273 and 1288–1317; these read VQPQ…ANAS and GGDA…KSSA.

The protein belongs to the CLU family. May associate with the eukaryotic translation initiation factor 3 (eIF-3) complex.

Its subcellular location is the cytoplasm. In terms of biological role, mRNA-binding protein involved in proper cytoplasmic distribution of mitochondria. The chain is Clustered mitochondria protein homolog from Neosartorya fischeri (strain ATCC 1020 / DSM 3700 / CBS 544.65 / FGSC A1164 / JCM 1740 / NRRL 181 / WB 181) (Aspergillus fischerianus).